Consider the following 535-residue polypeptide: Dimethylaniline monooxygenase [N-oxide-forming] 2 (535 aa).

Residues 9–13, glutamate 32, 40–41, and 61–62 each bind FAD; these read GAGVS, LW, and NT. Residues 60 to 61 and 195 to 198 contribute to the NADP(+) site; these read TN and SAAD. Residue lysine 492 forms a Glycyl lysine isopeptide (Lys-Gly) (interchain with G-Cter in SUMO) linkage. A helical membrane pass occupies residues 510–530; that stretch reads APVSFLIKVLGLLAIVLAFFF.

It belongs to the FMO family. The cofactor is FAD. Requires Mg(2+) as cofactor.

It is found in the microsome membrane. The protein localises to the endoplasmic reticulum membrane. Catalyzes the oxidative metabolism of numerous xenobiotics, including mainly therapeutic drugs and insecticides that contain a soft nucleophile, most commonly nitrogen and sulfur and participates to their bioactivation. The chain is Dimethylaniline monooxygenase [N-oxide-forming] 2 from Rattus norvegicus (Rat).